Consider the following 403-residue polypeptide: Flagellar hook protein FlgE (403 aa).

The protein belongs to the flagella basal body rod proteins family.

Its subcellular location is the bacterial flagellum basal body. The sequence is that of Flagellar hook protein FlgE (flgE) from Salmonella typhi.